Here is a 203-residue protein sequence, read N- to C-terminus: FMN-dependent NADH:quinone oxidoreductase 1 (203 aa).

Residues Ser9, 15–17 (SAS), 95–98 (MYNF), and 139–142 (TAGG) contribute to the FMN site.

This sequence belongs to the azoreductase type 1 family. Homodimer. FMN serves as cofactor.

It catalyses the reaction 2 a quinone + NADH + H(+) = 2 a 1,4-benzosemiquinone + NAD(+). It carries out the reaction N,N-dimethyl-1,4-phenylenediamine + anthranilate + 2 NAD(+) = 2-(4-dimethylaminophenyl)diazenylbenzoate + 2 NADH + 2 H(+). Its function is as follows. Quinone reductase that provides resistance to thiol-specific stress caused by electrophilic quinones. In terms of biological role, also exhibits azoreductase activity. Catalyzes the reductive cleavage of the azo bond in aromatic azo compounds to the corresponding amines. The chain is FMN-dependent NADH:quinone oxidoreductase 1 from Pseudomonas putida (strain ATCC 47054 / DSM 6125 / CFBP 8728 / NCIMB 11950 / KT2440).